The sequence spans 243 residues: Venom nerve growth factor 3 (243 aa).

A signal peptide spans 1–18 (MSMLCYTLIIAFLIGIWA). Positions 19–125 (APKSEDNVPL…ALNRNIRAKR (107 aa)) are excised as a propeptide. Basic and acidic residues predominate over residues 47 to 66 (GLKTSRNTDQRHPAPKKAED). A disordered region spans residues 47 to 67 (GLKTSRNTDQRHPAPKKAEDQ). 3 cysteine pairs are disulfide-bonded: Cys139–Cys204, Cys182–Cys232, and Cys192–Cys234. Residues Asn148 and Asn151 are each glycosylated (N-linked (GlcNAc...) asparagine).

It belongs to the NGF-beta family. Homodimer; non-covalently linked. As to expression, expressed by the venom gland.

It localises to the secreted. Functionally, nerve growth factor is important for the development and maintenance of the sympathetic and sensory nervous systems. It stimulates division and differentiation of sympathetic and embryonic sensory neurons as well as basal forebrain cholinergic neurons in the brain. Its relevance in the snake venom is not clear. However, it has been shown to inhibit metalloproteinase-dependent proteolysis of platelet glycoprotein Ib alpha, suggesting a metalloproteinase inhibition to prevent metalloprotease autodigestion and/or protection against prey proteases. Binds a lipid between the two protein chains in the homodimer. The lipid-bound form promotes histamine relase from mouse mast cells, contrary to the lipid-free form. This Tropidechis carinatus (Australian rough-scaled snake) protein is Venom nerve growth factor 3.